The sequence spans 64 residues: MSLEDLKSKDVDALRAELLELRQTQMKLRLQKASGQLQQTHQIRNVRRDIARIKTLLTQKKVRV.

The protein belongs to the universal ribosomal protein uL29 family.

This is Large ribosomal subunit protein uL29 from Dichelobacter nodosus (strain VCS1703A).